The primary structure comprises 278 residues: MRIIVAEDIGFCSGVRRALKMTLSEINENEKIYTLGEIVHNKTVVDSLRKRGVNVLQENIIPEDAKNSSLIIRAHGISRDQLFELQKVFKKIVDTTCPIVHNLFQTASRIHQEGYRIVVFGKESHPEMSALKGYVKDATITLKPPELSGRICIMSQTTMSIDEFYDFVVKSISQSKFSEIRIINTVCEITARREKEAQKIAKQVDLMIIIGGKNSSNTSKLTKIASKFTRAIQIETPEEVDKINFDKVEMIGITTGTSTPEEDVKTVIDKIKCRRERK.

Cysteine 12 is a [4Fe-4S] cluster binding site. Residues histidine 40 and histidine 75 each coordinate (2E)-4-hydroxy-3-methylbut-2-enyl diphosphate. 2 residues coordinate dimethylallyl diphosphate: histidine 40 and histidine 75. Isopentenyl diphosphate is bound by residues histidine 40 and histidine 75. [4Fe-4S] cluster is bound at residue cysteine 97. Histidine 125 contributes to the (2E)-4-hydroxy-3-methylbut-2-enyl diphosphate binding site. Histidine 125 contributes to the dimethylallyl diphosphate binding site. Residue histidine 125 participates in isopentenyl diphosphate binding. Glutamate 127 functions as the Proton donor in the catalytic mechanism. Threonine 157 is a binding site for (2E)-4-hydroxy-3-methylbut-2-enyl diphosphate. Cysteine 187 serves as a coordination point for [4Fe-4S] cluster. 4 residues coordinate (2E)-4-hydroxy-3-methylbut-2-enyl diphosphate: serine 215, serine 216, asparagine 217, and serine 258. Serine 215, serine 216, asparagine 217, and serine 258 together coordinate dimethylallyl diphosphate. The isopentenyl diphosphate site is built by serine 215, serine 216, asparagine 217, and serine 258.

It belongs to the IspH family. It depends on [4Fe-4S] cluster as a cofactor.

It carries out the reaction isopentenyl diphosphate + 2 oxidized [2Fe-2S]-[ferredoxin] + H2O = (2E)-4-hydroxy-3-methylbut-2-enyl diphosphate + 2 reduced [2Fe-2S]-[ferredoxin] + 2 H(+). The enzyme catalyses dimethylallyl diphosphate + 2 oxidized [2Fe-2S]-[ferredoxin] + H2O = (2E)-4-hydroxy-3-methylbut-2-enyl diphosphate + 2 reduced [2Fe-2S]-[ferredoxin] + 2 H(+). The protein operates within isoprenoid biosynthesis; dimethylallyl diphosphate biosynthesis; dimethylallyl diphosphate from (2E)-4-hydroxy-3-methylbutenyl diphosphate: step 1/1. Its pathway is isoprenoid biosynthesis; isopentenyl diphosphate biosynthesis via DXP pathway; isopentenyl diphosphate from 1-deoxy-D-xylulose 5-phosphate: step 6/6. Its function is as follows. Catalyzes the conversion of 1-hydroxy-2-methyl-2-(E)-butenyl 4-diphosphate (HMBPP) into a mixture of isopentenyl diphosphate (IPP) and dimethylallyl diphosphate (DMAPP). Acts in the terminal step of the DOXP/MEP pathway for isoprenoid precursor biosynthesis. The polypeptide is 4-hydroxy-3-methylbut-2-enyl diphosphate reductase (Pseudothermotoga lettingae (strain ATCC BAA-301 / DSM 14385 / NBRC 107922 / TMO) (Thermotoga lettingae)).